The following is a 486-amino-acid chain: Probable glycine dehydrogenase (decarboxylating) subunit 2 (486 aa).

Position 273 is an N6-(pyridoxal phosphate)lysine (Lys-273).

Belongs to the GcvP family. C-terminal subunit subfamily. The glycine cleavage system is composed of four proteins: P, T, L and H. In this organism, the P 'protein' is a heterodimer of two subunits. Requires pyridoxal 5'-phosphate as cofactor.

It carries out the reaction N(6)-[(R)-lipoyl]-L-lysyl-[glycine-cleavage complex H protein] + glycine + H(+) = N(6)-[(R)-S(8)-aminomethyldihydrolipoyl]-L-lysyl-[glycine-cleavage complex H protein] + CO2. Functionally, the glycine cleavage system catalyzes the degradation of glycine. The P protein binds the alpha-amino group of glycine through its pyridoxal phosphate cofactor; CO(2) is released and the remaining methylamine moiety is then transferred to the lipoamide cofactor of the H protein. This Alkaliphilus oremlandii (strain OhILAs) (Clostridium oremlandii (strain OhILAs)) protein is Probable glycine dehydrogenase (decarboxylating) subunit 2.